Reading from the N-terminus, the 127-residue chain is Modulator protein MzrA (127 aa).

The Cytoplasmic portion of the chain corresponds to 1–9 (MQLPRVTLR). The chain crosses the membrane as a helical span at residues 10–32 (QMTWTTSAIVLLGITLLLWSAFR). Residues 33-127 (HQESTLAIRA…LLRDTSHRFG (95 aa)) are Periplasmic-facing.

The protein belongs to the MzrA family. Interacts with EnvZ.

The protein resides in the cell inner membrane. Modulates the activity of the EnvZ/OmpR two-component regulatory system, probably by directly modulating EnvZ enzymatic activity and increasing stability of phosphorylated OmpR. This chain is Modulator protein MzrA, found in Escherichia fergusonii (strain ATCC 35469 / DSM 13698 / CCUG 18766 / IAM 14443 / JCM 21226 / LMG 7866 / NBRC 102419 / NCTC 12128 / CDC 0568-73).